The primary structure comprises 37 residues: Large ribosomal subunit protein bL36 (37 aa).

The protein belongs to the bacterial ribosomal protein bL36 family.

This Shewanella baltica (strain OS223) protein is Large ribosomal subunit protein bL36.